We begin with the raw amino-acid sequence, 301 residues long: GTPase Era (301 aa).

The Era-type G domain occupies 7 to 175; the sequence is YCGFIAIVGR…AGIVRKHLPE (169 aa). The interval 15–22 is G1; that stretch reads GRPNVGKS. 15 to 22 contributes to the GTP binding site; it reads GRPNVGKS. Residues 41 to 45 form a G2 region; it reads QTTRH. Residues 62–65 are G3; the sequence is DTPG. GTP is bound by residues 62–66 and 124–127; these read DTPGL and NKVD. The interval 124-127 is G4; it reads NKVD. The interval 154 to 156 is G5; the sequence is ISA. The KH type-2 domain maps to 206-283; it reads LGAELPYSVT…HLELWVKVKS (78 aa).

The protein belongs to the TRAFAC class TrmE-Era-EngA-EngB-Septin-like GTPase superfamily. Era GTPase family. In terms of assembly, monomer.

Its subcellular location is the cytoplasm. It localises to the cell inner membrane. Functionally, an essential GTPase that binds both GDP and GTP, with rapid nucleotide exchange. Plays a role in 16S rRNA processing and 30S ribosomal subunit biogenesis and possibly also in cell cycle regulation and energy metabolism. The chain is GTPase Era from Salmonella paratyphi B (strain ATCC BAA-1250 / SPB7).